A 543-amino-acid polypeptide reads, in one-letter code: MKNINPTTTKAWKELEDHYKEIKNEHMKDMFNNDEKRSEKFTIQWEDFYVDYSKNRITEDTRALLLQLAEECHLKDAINSYFGGEAINQTENRPVLHTALRANKDADIKVSNKNVVPEVQEVKAKIRDFSNDIIDGTQKGYTGKAFTDIVNIGIGGSDLGPVMVTESLEFYKNHLKVHFISNVDGDHVHETIKDLNPETTLFLIVSKTFTTMETLSNATTVREWFLKSAPQKEVSKHFVAVSTNLQQVEDFGIDVKNIFPMWDWVGGRFSLWSAVGLSISLAIGYENFESLLDGARKMDDHFKETSFEENLPVQLALISIWYNNFFKAESEAVIPYSQYLDKFPSYLQQAIMESNGKSVDRNGEKVDYQTGTIIWGEPGTNSQHAFFQLIHQGTKLIPTDFIGFKHSLFEDKDHQDKLMANYFAQTEALLNGKTEQEVEGELKSKAFSQEEIDRIKAFKVFEGNNPTNTILIEKLTPESMGKLIALYEHKIFVQGVIWNIFSYDQWGVELGKQLANKILAEFSSKTTDNHDSSTKKLLKFYMS.

E353 acts as the Proton donor in catalysis. Catalysis depends on residues H384 and K512.

The protein belongs to the GPI family.

The protein localises to the cytoplasm. The catalysed reaction is alpha-D-glucose 6-phosphate = beta-D-fructose 6-phosphate. The protein operates within carbohydrate biosynthesis; gluconeogenesis. It participates in carbohydrate degradation; glycolysis; D-glyceraldehyde 3-phosphate and glycerone phosphate from D-glucose: step 2/4. In terms of biological role, catalyzes the reversible isomerization of glucose-6-phosphate to fructose-6-phosphate. The polypeptide is Glucose-6-phosphate isomerase (Christiangramia forsetii (strain DSM 17595 / CGMCC 1.15422 / KT0803) (Gramella forsetii)).